The primary structure comprises 517 residues: ATP synthase subunit beta (517 aa).

Gly-167 to Thr-174 contributes to the ATP binding site. 2 stretches are compositionally biased toward basic and acidic residues: residues Ala-475–Asp-484 and Asp-495–Asp-508. The disordered stretch occupies residues Ala-475–Ala-517.

This sequence belongs to the ATPase alpha/beta chains family. As to quaternary structure, F-type ATPases have 2 components, CF(1) - the catalytic core - and CF(0) - the membrane proton channel. CF(1) has five subunits: alpha(3), beta(3), gamma(1), delta(1), epsilon(1). CF(0) has three main subunits: a(1), b(2) and c(9-12). The alpha and beta chains form an alternating ring which encloses part of the gamma chain. CF(1) is attached to CF(0) by a central stalk formed by the gamma and epsilon chains, while a peripheral stalk is formed by the delta and b chains.

It is found in the cell membrane. The enzyme catalyses ATP + H2O + 4 H(+)(in) = ADP + phosphate + 5 H(+)(out). Produces ATP from ADP in the presence of a proton gradient across the membrane. The catalytic sites are hosted primarily by the beta subunits. This chain is ATP synthase subunit beta, found in Mycobacterium sp. (strain JLS).